The primary structure comprises 226 residues: Ribonuclease 3 (226 aa).

The 123-residue stretch at 7–129 folds into the RNase III domain; the sequence is LPRLCRTLGY…IIGAIYLDSD (123 aa). E42 lines the Mg(2+) pocket. D46 is a catalytic residue. Residues D115 and E118 each coordinate Mg(2+). E118 is an active-site residue. The 71-residue stretch at 156–226 folds into the DRBM domain; it reads DAKTLLQEYL…AAQVLELLKK (71 aa).

The protein belongs to the ribonuclease III family. Homodimer. Mg(2+) serves as cofactor.

It localises to the cytoplasm. It carries out the reaction Endonucleolytic cleavage to 5'-phosphomonoester.. Functionally, digests double-stranded RNA. Involved in the processing of primary rRNA transcript to yield the immediate precursors to the large and small rRNAs (23S and 16S). Processes some mRNAs, and tRNAs when they are encoded in the rRNA operon. Processes pre-crRNA and tracrRNA of type II CRISPR loci if present in the organism. This chain is Ribonuclease 3, found in Shewanella sp. (strain MR-7).